Reading from the N-terminus, the 505-residue chain is Protein MGF 505-4R (505 aa).

The protein belongs to the asfivirus MGF 505 family.

Its function is as follows. Plays a role in virus cell tropism, and may be required for efficient virus replication in macrophages. The protein is Protein MGF 505-4R of Ornithodoros (relapsing fever ticks).